The sequence spans 99 residues: NADH dehydrogenase [ubiquinone] 1 alpha subcomplex subunit 2 (99 aa).

A2 bears the N-acetylalanine mark. A disulfide bridge connects residues C24 and C58. At K64 the chain carries N6-acetyllysine; alternate. K64 carries the post-translational modification N6-succinyllysine; alternate. K75 bears the N6-acetyllysine mark.

The protein belongs to the complex I NDUFA2 subunit family. Complex I is composed of 45 different subunits.

The protein localises to the mitochondrion inner membrane. Functionally, accessory subunit of the mitochondrial membrane respiratory chain NADH dehydrogenase (Complex I), that is believed not to be involved in catalysis. Complex I functions in the transfer of electrons from NADH to the respiratory chain. The immediate electron acceptor for the enzyme is believed to be ubiquinone. This is NADH dehydrogenase [ubiquinone] 1 alpha subcomplex subunit 2 (NDUFA2) from Bos taurus (Bovine).